The sequence spans 404 residues: Probable tRNA sulfurtransferase (404 aa).

The THUMP domain maps to 61–166 (EAVSERLKDV…SGYSYIMCDE (106 aa)). Residues 184-185 (LL), 209-210 (HF), arginine 266, glycine 288, and glutamine 297 contribute to the ATP site.

Belongs to the ThiI family.

It is found in the cytoplasm. The catalysed reaction is [ThiI sulfur-carrier protein]-S-sulfanyl-L-cysteine + a uridine in tRNA + 2 reduced [2Fe-2S]-[ferredoxin] + ATP + H(+) = [ThiI sulfur-carrier protein]-L-cysteine + a 4-thiouridine in tRNA + 2 oxidized [2Fe-2S]-[ferredoxin] + AMP + diphosphate. It catalyses the reaction [ThiS sulfur-carrier protein]-C-terminal Gly-Gly-AMP + S-sulfanyl-L-cysteinyl-[cysteine desulfurase] + AH2 = [ThiS sulfur-carrier protein]-C-terminal-Gly-aminoethanethioate + L-cysteinyl-[cysteine desulfurase] + A + AMP + 2 H(+). It functions in the pathway cofactor biosynthesis; thiamine diphosphate biosynthesis. Catalyzes the ATP-dependent transfer of a sulfur to tRNA to produce 4-thiouridine in position 8 of tRNAs, which functions as a near-UV photosensor. Also catalyzes the transfer of sulfur to the sulfur carrier protein ThiS, forming ThiS-thiocarboxylate. This is a step in the synthesis of thiazole, in the thiamine biosynthesis pathway. The sulfur is donated as persulfide by IscS. The protein is Probable tRNA sulfurtransferase of Bacillus cereus (strain ATCC 10987 / NRS 248).